A 300-amino-acid chain; its full sequence is MKIAILSRDGTLYSCKRLREAAMKRGHLVEILDPLSCYMNISPAASSIHYKGRQLPHFDAVIPRIGSAITFYGTAALRQFEMLGSYPLNESVAITRARDKLRSLQLLARQGIDLPVTGIAHSPDDTSDLIDMVGGAPLVVKLVEGTQGIGVVLAETRQAAESVIDAFRGLNAHILVQEYIKEARGRDIRCLVVGDEVVAAIERRAKEGDFRSNLHRGGMASIASITPREREIAIKAAQTMGLDVAGVDILRAERGPLVMEVNASPGLEGVEKTTGVDIAGRMIQWIERHATPEFCLKTGG.

The ATP-grasp domain occupies 104 to 287 (LQLLARQGID…IAGRMIQWIE (184 aa)). Residues lysine 141, 178-179 (EY), aspartate 187, and 211-213 (RSN) contribute to the ATP site. Positions 248, 260, and 262 each coordinate Mg(2+). Mn(2+)-binding residues include aspartate 248, glutamate 260, and asparagine 262.

The protein belongs to the RimK family. The cofactor is Mg(2+). Mn(2+) serves as cofactor.

This Citrobacter koseri (strain ATCC BAA-895 / CDC 4225-83 / SGSC4696) protein is Probable alpha-L-glutamate ligase.